Here is a 627-residue protein sequence, read N- to C-terminus: Sister chromatid cohesion 1 protein 1 (627 aa).

3 disordered regions span residues 211-294 (GDDE…TATS), 395-416 (MHNH…NLDS), and 461-510 (GDDV…VAEE). 3 stretches are compositionally biased toward basic and acidic residues: residues 254–263 (EQQENRRDGF), 272–282 (IPDKEEHDRPQ), and 395–408 (MHNH…ERSD). The span at 467 to 487 (MPSTPSARGAASINNIEISSK) shows a compositional bias: polar residues.

The protein belongs to the rad21 family. In terms of assembly, component of the cohesin complex. Isoform 2 is expressed at low levels in buds, leaves and roots, whereas expression of isoform 1 is confined to buds.

Its subcellular location is the nucleus. Its function is as follows. Involved in chromosome condensation, pairing and segregation during meiosis. Responsible for cohesion between replicated sister chromatids. This is Sister chromatid cohesion 1 protein 1 (SYN1) from Arabidopsis thaliana (Mouse-ear cress).